Reading from the N-terminus, the 163-residue chain is Protein-export protein SecB (163 aa).

This sequence belongs to the SecB family. As to quaternary structure, homotetramer, a dimer of dimers. One homotetramer interacts with 1 SecA dimer.

It localises to the cytoplasm. In terms of biological role, one of the proteins required for the normal export of preproteins out of the cell cytoplasm. It is a molecular chaperone that binds to a subset of precursor proteins, maintaining them in a translocation-competent state. It also specifically binds to its receptor SecA. This is Protein-export protein SecB from Caulobacter vibrioides (strain ATCC 19089 / CIP 103742 / CB 15) (Caulobacter crescentus).